We begin with the raw amino-acid sequence, 29 residues long: ATP synthase subunit 9, mitochondrial (29 aa).

The protein belongs to the ATPase C chain family. As to quaternary structure, F-type ATPases have 2 components, CF(1) - the catalytic core - and CF(0) - the membrane proton channel. CF(1) has five subunits: alpha(3), beta(3), gamma(1), delta(1), epsilon(1). CF(0) has three main subunits: a, b and c.

Its subcellular location is the mitochondrion membrane. In terms of biological role, mitochondrial membrane ATP synthase (F(1)F(0) ATP synthase or Complex V) produces ATP from ADP in the presence of a proton gradient across the membrane which is generated by electron transport complexes of the respiratory chain. F-type ATPases consist of two structural domains, F(1) - containing the extramembraneous catalytic core and F(0) - containing the membrane proton channel, linked together by a central stalk and a peripheral stalk. During catalysis, ATP synthesis in the catalytic domain of F(1) is coupled via a rotary mechanism of the central stalk subunits to proton translocation. Part of the complex F(0) domain. A homomeric c-ring of probably 10 subunits is part of the complex rotary element. This chain is ATP synthase subunit 9, mitochondrial (ATP9), found in Wickerhamomyces pijperi (Yeast).